We begin with the raw amino-acid sequence, 557 residues long: Dihydroxy-acid dehydratase (557 aa).

Aspartate 78 lines the Mg(2+) pocket. Cysteine 119 lines the [2Fe-2S] cluster pocket. Residues aspartate 120 and lysine 121 each contribute to the Mg(2+) site. An N6-carboxylysine modification is found at lysine 121. Residue cysteine 192 participates in [2Fe-2S] cluster binding. Glutamate 442 is a Mg(2+) binding site. The Proton acceptor role is filled by serine 468.

The protein belongs to the IlvD/Edd family. As to quaternary structure, homodimer. It depends on [2Fe-2S] cluster as a cofactor. Mg(2+) is required as a cofactor.

The catalysed reaction is (2R)-2,3-dihydroxy-3-methylbutanoate = 3-methyl-2-oxobutanoate + H2O. It catalyses the reaction (2R,3R)-2,3-dihydroxy-3-methylpentanoate = (S)-3-methyl-2-oxopentanoate + H2O. It functions in the pathway amino-acid biosynthesis; L-isoleucine biosynthesis; L-isoleucine from 2-oxobutanoate: step 3/4. The protein operates within amino-acid biosynthesis; L-valine biosynthesis; L-valine from pyruvate: step 3/4. Its function is as follows. Functions in the biosynthesis of branched-chain amino acids. Catalyzes the dehydration of (2R,3R)-2,3-dihydroxy-3-methylpentanoate (2,3-dihydroxy-3-methylvalerate) into 2-oxo-3-methylpentanoate (2-oxo-3-methylvalerate) and of (2R)-2,3-dihydroxy-3-methylbutanoate (2,3-dihydroxyisovalerate) into 2-oxo-3-methylbutanoate (2-oxoisovalerate), the penultimate precursor to L-isoleucine and L-valine, respectively. This is Dihydroxy-acid dehydratase from Bacillus mycoides (strain KBAB4) (Bacillus weihenstephanensis).